Consider the following 148-residue polypeptide: Urease accessory protein UreE (148 aa).

This sequence belongs to the UreE family.

The protein localises to the cytoplasm. Involved in urease metallocenter assembly. Binds nickel. Probably functions as a nickel donor during metallocenter assembly. This is Urease accessory protein UreE from Lysinibacillus sphaericus (strain C3-41).